The following is a 172-amino-acid chain: Ribosome maturation factor RimM (172 aa).

One can recognise a PRC barrel domain in the interval 96–168 (DGEFYYHEII…RIEVELMEGL (73 aa)).

Belongs to the RimM family. Binds ribosomal protein uS19.

It is found in the cytoplasm. Functionally, an accessory protein needed during the final step in the assembly of 30S ribosomal subunit, possibly for assembly of the head region. Essential for efficient processing of 16S rRNA. May be needed both before and after RbfA during the maturation of 16S rRNA. It has affinity for free ribosomal 30S subunits but not for 70S ribosomes. The chain is Ribosome maturation factor RimM from Streptococcus thermophilus (strain ATCC BAA-491 / LMD-9).